We begin with the raw amino-acid sequence, 223 residues long: Probable chemoreceptor glutamine deamidase CheD (223 aa).

The tract at residues Q189 to S223 is disordered.

This sequence belongs to the CheD family.

The enzyme catalyses L-glutaminyl-[protein] + H2O = L-glutamyl-[protein] + NH4(+). Its function is as follows. Probably deamidates glutamine residues to glutamate on methyl-accepting chemotaxis receptors (MCPs), playing an important role in chemotaxis. This Bordetella petrii (strain ATCC BAA-461 / DSM 12804 / CCUG 43448) protein is Probable chemoreceptor glutamine deamidase CheD.